The following is a 176-amino-acid chain: Putative metal-dependent hydrolase BLi00869/BLi00870/BL03027 (176 aa).

Residues histidine 65, histidine 158, and histidine 162 each coordinate Zn(2+).

It belongs to the metal hydrolase YfiT family. As to quaternary structure, homodimer. Requires Zn(2+) as cofactor.

Its subcellular location is the cytoplasm. In terms of biological role, possible metal-dependent hydrolase. The sequence is that of Putative metal-dependent hydrolase BLi00869/BLi00870/BL03027 from Bacillus licheniformis (strain ATCC 14580 / DSM 13 / JCM 2505 / CCUG 7422 / NBRC 12200 / NCIMB 9375 / NCTC 10341 / NRRL NRS-1264 / Gibson 46).